Reading from the N-terminus, the 369-residue chain is 4-hydroxy-3-methylbut-2-en-1-yl diphosphate synthase (flavodoxin) (369 aa).

Residues cysteine 268, cysteine 271, cysteine 303, and glutamate 310 each contribute to the [4Fe-4S] cluster site.

The protein belongs to the IspG family. The cofactor is [4Fe-4S] cluster.

The catalysed reaction is (2E)-4-hydroxy-3-methylbut-2-enyl diphosphate + oxidized [flavodoxin] + H2O + 2 H(+) = 2-C-methyl-D-erythritol 2,4-cyclic diphosphate + reduced [flavodoxin]. It participates in isoprenoid biosynthesis; isopentenyl diphosphate biosynthesis via DXP pathway; isopentenyl diphosphate from 1-deoxy-D-xylulose 5-phosphate: step 5/6. Functionally, converts 2C-methyl-D-erythritol 2,4-cyclodiphosphate (ME-2,4cPP) into 1-hydroxy-2-methyl-2-(E)-butenyl 4-diphosphate. The polypeptide is 4-hydroxy-3-methylbut-2-en-1-yl diphosphate synthase (flavodoxin) (Exiguobacterium sibiricum (strain DSM 17290 / CCUG 55495 / CIP 109462 / JCM 13490 / 255-15)).